The primary structure comprises 315 residues: L-lactate dehydrogenase (315 aa).

NAD(+) contacts are provided by residues Val14, Asp35, Tyr67, and 81 to 82 (GV). Residues Gln84, Arg91, and 123 to 126 (NPVD) contribute to the substrate site. Residues 121 to 123 (ASN) and Ser146 each bind NAD(+). Residue 151–154 (DSAR) participates in substrate binding. His178 functions as the Proton acceptor in the catalytic mechanism. Position 219 is a phosphotyrosine (Tyr219). Thr228 is a binding site for substrate.

This sequence belongs to the LDH/MDH superfamily. LDH family. In terms of assembly, homotetramer.

It localises to the cytoplasm. The enzyme catalyses (S)-lactate + NAD(+) = pyruvate + NADH + H(+). It participates in fermentation; pyruvate fermentation to lactate; (S)-lactate from pyruvate: step 1/1. Functionally, catalyzes the conversion of lactate to pyruvate. The protein is L-lactate dehydrogenase of Malacoplasma penetrans (strain HF-2) (Mycoplasma penetrans).